A 145-amino-acid polypeptide reads, in one-letter code: 3-dehydroquinate dehydratase (145 aa).

Tyrosine 22 (proton acceptor) is an active-site residue. Asparagine 71, histidine 77, and aspartate 84 together coordinate substrate. Histidine 97 (proton donor) is an active-site residue. Residues 98–99 (LS) and arginine 108 each bind substrate.

The protein belongs to the type-II 3-dehydroquinase family. As to quaternary structure, homododecamer.

It carries out the reaction 3-dehydroquinate = 3-dehydroshikimate + H2O. It functions in the pathway metabolic intermediate biosynthesis; chorismate biosynthesis; chorismate from D-erythrose 4-phosphate and phosphoenolpyruvate: step 3/7. Functionally, catalyzes a trans-dehydration via an enolate intermediate. This chain is 3-dehydroquinate dehydratase, found in Francisella philomiragia subsp. philomiragia (strain ATCC 25017 / CCUG 19701 / FSC 153 / O#319-036).